The following is a 215-amino-acid chain: MTTQRHYSPIDRLLLQADAAMRTLLPFSGQPYRPSPAIVQPDVQMSDEDIRHVAGLMRINHTGEVCAQALYQGQALTAKLPQVREAMEHAAEEEIDHLVWCEQRIHQLGSHTSVLNPLFYGMSFGIGAVAGLISDKVSLGFVAATEHQVCKHLNEHLEQLPAEDEKSRAILEQMRIDEEHHAESALEAGGFRFPAPVKFGMSLLAKVMTKSTYRI.

Fe cation contacts are provided by E64, E94, H97, E146, E178, and H181.

Belongs to the COQ7 family. Requires Fe cation as cofactor.

Its subcellular location is the cell membrane. The enzyme catalyses a 5-methoxy-2-methyl-3-(all-trans-polyprenyl)benzene-1,4-diol + AH2 + O2 = a 3-demethylubiquinol + A + H2O. Its pathway is cofactor biosynthesis; ubiquinone biosynthesis. Catalyzes the hydroxylation of 2-nonaprenyl-3-methyl-6-methoxy-1,4-benzoquinol during ubiquinone biosynthesis. The polypeptide is 3-demethoxyubiquinol 3-hydroxylase (Pseudomonas fluorescens (strain Pf0-1)).